The chain runs to 327 residues: Tetraacyldisaccharide 4'-kinase (327 aa).

52-59 lines the ATP pocket; that stretch reads TAGGAGKT.

This sequence belongs to the LpxK family.

It carries out the reaction a lipid A disaccharide + ATP = a lipid IVA + ADP + H(+). It participates in glycolipid biosynthesis; lipid IV(A) biosynthesis; lipid IV(A) from (3R)-3-hydroxytetradecanoyl-[acyl-carrier-protein] and UDP-N-acetyl-alpha-D-glucosamine: step 6/6. In terms of biological role, transfers the gamma-phosphate of ATP to the 4'-position of a tetraacyldisaccharide 1-phosphate intermediate (termed DS-1-P) to form tetraacyldisaccharide 1,4'-bis-phosphate (lipid IVA). The chain is Tetraacyldisaccharide 4'-kinase from Gluconacetobacter diazotrophicus (strain ATCC 49037 / DSM 5601 / CCUG 37298 / CIP 103539 / LMG 7603 / PAl5).